The primary structure comprises 689 residues: Glycine--tRNA ligase beta subunit (689 aa).

This sequence belongs to the class-II aminoacyl-tRNA synthetase family. As to quaternary structure, tetramer of two alpha and two beta subunits.

It is found in the cytoplasm. It carries out the reaction tRNA(Gly) + glycine + ATP = glycyl-tRNA(Gly) + AMP + diphosphate. This Salmonella schwarzengrund (strain CVM19633) protein is Glycine--tRNA ligase beta subunit.